The sequence spans 524 residues: uncharacterized protein (524 aa).

The helical transmembrane segment at 13-33 threads the bilayer; sequence EFILLILGMTVVGIVITMGLV.

Its subcellular location is the membrane. This is an uncharacterized protein from Methanocaldococcus jannaschii (strain ATCC 43067 / DSM 2661 / JAL-1 / JCM 10045 / NBRC 100440) (Methanococcus jannaschii).